The sequence spans 868 residues: Leucine-rich repeat receptor-like serine/threonine-protein kinase At2g14510 (868 aa).

The first 23 residues, M1–S23, serve as a signal peptide directing secretion. Topologically, residues Q24 to A510 are extracellular. N48, N68, N231, N235, N258, N291, N433, and N446 each carry an N-linked (GlcNAc...) asparagine glycan. LRR repeat units follow at residues R412–T435, M436–I458, and P460–R482. An N-linked (GlcNAc...) asparagine glycan is attached at N495. Residues I511–F531 form a helical membrane-spanning segment. Topologically, residues R532–R868 are cytoplasmic. The 270-residue stretch at N563–N832 folds into the Protein kinase domain. Residues L569–V577 and K590 contribute to the ATP site. Y635 bears the Phosphotyrosine mark. The active-site Proton acceptor is D687. Residue S721 is modified to Phosphoserine. A phosphothreonine mark is found at T722 and T727. Y735 carries the phosphotyrosine modification.

The protein belongs to the protein kinase superfamily. Ser/Thr protein kinase family.

The protein resides in the cell membrane. The enzyme catalyses L-seryl-[protein] + ATP = O-phospho-L-seryl-[protein] + ADP + H(+). It carries out the reaction L-threonyl-[protein] + ATP = O-phospho-L-threonyl-[protein] + ADP + H(+). This is Leucine-rich repeat receptor-like serine/threonine-protein kinase At2g14510 from Arabidopsis thaliana (Mouse-ear cress).